Consider the following 637-residue polypeptide: Threonine--tRNA ligase (637 aa).

A TGS domain is found at 1 to 61; that stretch reads MLNITLPDGS…VEDSAVQIIT (61 aa). The catalytic stretch occupies residues 242–533; the sequence is DHRKLGKQLD…LIENHAGSFP (292 aa). Cys333, His384, and His510 together coordinate Zn(2+).

This sequence belongs to the class-II aminoacyl-tRNA synthetase family. As to quaternary structure, homodimer. Zn(2+) is required as a cofactor.

It localises to the cytoplasm. It catalyses the reaction tRNA(Thr) + L-threonine + ATP = L-threonyl-tRNA(Thr) + AMP + diphosphate + H(+). Functionally, catalyzes the attachment of threonine to tRNA(Thr) in a two-step reaction: L-threonine is first activated by ATP to form Thr-AMP and then transferred to the acceptor end of tRNA(Thr). Also edits incorrectly charged L-seryl-tRNA(Thr). This Neisseria meningitidis serogroup B (strain ATCC BAA-335 / MC58) protein is Threonine--tRNA ligase.